The sequence spans 122 residues: Large ribosomal subunit protein uL14 (122 aa).

Belongs to the universal ribosomal protein uL14 family. As to quaternary structure, part of the 50S ribosomal subunit. Forms a cluster with proteins L3 and L19. In the 70S ribosome, L14 and L19 interact and together make contacts with the 16S rRNA in bridges B5 and B8.

Functionally, binds to 23S rRNA. Forms part of two intersubunit bridges in the 70S ribosome. In Anaeromyxobacter dehalogenans (strain 2CP-1 / ATCC BAA-258), this protein is Large ribosomal subunit protein uL14.